The sequence spans 1364 residues: RecQ-like DNA helicase BLM (1364 aa).

Disordered stretches follow at residues 108–131 (VHGNDSANKPPSTEDAASKKTGIN) and 147–174 (DDFDTSVSPPKSHAGKGGKTPQKCKNTS). A necessary for dimerization and homooligomerization region spans residues 328 to 377 (DSKVPSQLLTLMLEICDLVDKIPISELHVLSCGLDLKKKRDMRKRLLSND). Disordered stretches follow at residues 380–416 (FRSSPADSSTVSLTSCTSSTQNRDFNVNAPKGAESLS), 484–515 (RFNTPQNEKPISSSTCTRPYSQPIDDMDNPDL), and 535–580 (SPAA…SLLS). Positions 387-399 (SSTVSLTSCTSST) are enriched in low complexity. Residues 484 to 503 (RFNTPQNEKPISSSTCTRPY) show a composition bias toward polar residues. Residues 555–566 (AQLDSRNKEKNT) are compositionally biased toward basic and acidic residues. Over residues 567–580 (RNNTGDTTNPSLLS) the composition is skewed to polar residues. Residues 620–624 (FRTNQ) and 644–648 (GGGKS) contribute to the ATP site. The Helicase ATP-binding domain occupies 628-803 (INACLCGEDC…LNQLKMTKPQ (176 aa)). A DEAH box motif is present at residues 747–750 (DEAH). 3' overhang DNA-binding stretches follow at residues 822 to 825 (KPKR) and 849 to 851 (SRH). Positions 829–976 (DCVEWIKKHH…TKQTHFNNLY (148 aa)) constitute a Helicase C-terminal domain. Residue R934 participates in ATP binding. The 3' overhang DNA-binding stretch occupies residues 952–955 (RIRR). Residues C988, C1007, C1015, and C1018 each coordinate Zn(2+). Residues 1046–1090 (LVQGRGKGRSNNTRLTLNMMVDIFLGSKSAKIQTGLFGKGAAYSR) form a DNA Holliday junction binding region. 3' overhang DNA-binding stretches follow at residues 1061–1063 (TLN), 1072–1076 (SKSAK), and 1111–1117 (YITFNDQ). The HRDC domain occupies 1164-1244 (EEMVKKCQAE…QKYSEWTLPV (81 aa)). The tract at residues 1179 to 1196 (KRLGKIFGVHYFNIFNTA) is necessary for ssDNA and DNA Holliday junction binding. ATP is bound at residue N1194. The segment at 1251 to 1364 (SGGPANVSAR…RFLKPSYSMF (114 aa)) is disordered. The segment covering 1273–1282 (KSSYFSSNNK) has biased composition (polar residues). A compositionally biased stretch (basic residues) spans 1283–1300 (KGPKRKNSSYFGKSKKRK). A Nuclear localization signal motif is present at residues 1285–1301 (PKRKNSSYFGKSKKRKT). Positions 1306–1335 (QQSRSKNGNSSYARKNSTAKTSSSYISGSK) are enriched in polar residues.

The protein belongs to the helicase family. RecQ subfamily. Monomer. Homodimer (via N-terminus). Homotetramer (via N-terminus); dimer of dimers. Homohexamer (via N-terminus). Self-association negatively regulates DNA unwinding amplitude and rate. Oligomer complexes dissociate into monomer in presence of ATP. It depends on Zn(2+) as a cofactor.

The protein resides in the nucleus. It carries out the reaction Couples ATP hydrolysis with the unwinding of duplex DNA by translocating in the 3'-5' direction.. The catalysed reaction is ATP + H2O = ADP + phosphate + H(+). In terms of biological role, ATP-dependent DNA helicase that unwinds single- and double-stranded DNA in a 3'-5' direction. Participates in DNA replication and repair. Involved in 5'-end resection of DNA during double-strand break (DSB) repair. Negatively regulates sister chromatid exchange (SCE). Stimulates DNA 4-way junction branch migration and DNA Holliday junction dissolution. Binds single-stranded DNA (ssDNA), forked duplex DNA and DNA Holliday junction. The chain is RecQ-like DNA helicase BLM (blm) from Xenopus laevis (African clawed frog).